The following is a 410-amino-acid chain: Argininosuccinate synthase (410 aa).

ATP is bound by residues 14–22 (AYSGGLDTS) and Ala-41. L-citrulline contacts are provided by Tyr-92 and Ser-97. Gly-122 contacts ATP. Positions 124, 128, and 129 each coordinate L-aspartate. Residue Asn-128 participates in L-citrulline binding. Residues Arg-132, Ser-183, Ser-192, Glu-268, and Tyr-280 each coordinate L-citrulline.

Belongs to the argininosuccinate synthase family. Type 1 subfamily. In terms of assembly, homotetramer.

The protein resides in the cytoplasm. It catalyses the reaction L-citrulline + L-aspartate + ATP = 2-(N(omega)-L-arginino)succinate + AMP + diphosphate + H(+). It participates in amino-acid biosynthesis; L-arginine biosynthesis; L-arginine from L-ornithine and carbamoyl phosphate: step 2/3. The protein is Argininosuccinate synthase of Parvibaculum lavamentivorans (strain DS-1 / DSM 13023 / NCIMB 13966).